The primary structure comprises 257 residues: Hydroxyethylthiazole kinase 1 (257 aa).

Met-41 provides a ligand contact to substrate. ATP is bound by residues Lys-117 and Thr-162. Gly-189 serves as a coordination point for substrate.

Belongs to the Thz kinase family. The cofactor is Mg(2+).

It catalyses the reaction 5-(2-hydroxyethyl)-4-methylthiazole + ATP = 4-methyl-5-(2-phosphooxyethyl)-thiazole + ADP + H(+). It functions in the pathway cofactor biosynthesis; thiamine diphosphate biosynthesis; 4-methyl-5-(2-phosphoethyl)-thiazole from 5-(2-hydroxyethyl)-4-methylthiazole: step 1/1. Functionally, catalyzes the phosphorylation of the hydroxyl group of 4-methyl-5-beta-hydroxyethylthiazole (THZ). The polypeptide is Hydroxyethylthiazole kinase 1 (Oceanobacillus iheyensis (strain DSM 14371 / CIP 107618 / JCM 11309 / KCTC 3954 / HTE831)).